We begin with the raw amino-acid sequence, 150 residues long: Cytochrome c-type biogenesis protein CcmE (150 aa).

Residues 1–9 (MRNLKKTRR) lie on the Cytoplasmic side of the membrane. Residues 10–30 (IQILLVAGGALVLSTALIGYG) traverse the membrane as a helical; Signal-anchor for type II membrane protein segment. At 31 to 150 (MRDGINFFRA…VYRDPAQPEG (120 aa)) the chain is on the periplasmic side. H123 and Y127 together coordinate heme.

This sequence belongs to the CcmE/CycJ family.

The protein resides in the cell inner membrane. Heme chaperone required for the biogenesis of c-type cytochromes. Transiently binds heme delivered by CcmC and transfers the heme to apo-cytochromes in a process facilitated by CcmF and CcmH. This chain is Cytochrome c-type biogenesis protein CcmE, found in Rhodobacter capsulatus (strain ATCC BAA-309 / NBRC 16581 / SB1003).